The chain runs to 467 residues: ATP synthase subunit beta (467 aa).

An ATP-binding site is contributed by 150-157; that stretch reads GGAGVGKT.

Belongs to the ATPase alpha/beta chains family. F-type ATPases have 2 components, CF(1) - the catalytic core - and CF(0) - the membrane proton channel. CF(1) has five subunits: alpha(3), beta(3), gamma(1), delta(1), epsilon(1). CF(0) has three main subunits: a(1), b(2) and c(9-12). The alpha and beta chains form an alternating ring which encloses part of the gamma chain. CF(1) is attached to CF(0) by a central stalk formed by the gamma and epsilon chains, while a peripheral stalk is formed by the delta and b chains.

The protein resides in the cell inner membrane. The catalysed reaction is ATP + H2O + 4 H(+)(in) = ADP + phosphate + 5 H(+)(out). Functionally, produces ATP from ADP in the presence of a proton gradient across the membrane. The catalytic sites are hosted primarily by the beta subunits. This Polaromonas sp. (strain JS666 / ATCC BAA-500) protein is ATP synthase subunit beta.